Reading from the N-terminus, the 382-residue chain is Galactokinase (382 aa).

34–37 (EHTD) provides a ligand contact to substrate. 124–130 (GAGLSSS) contributes to the ATP binding site. Positions 130 and 162 each coordinate Mg(2+). The Proton acceptor role is filled by aspartate 174. Substrate is bound at residue tyrosine 223.

It belongs to the GHMP kinase family. GalK subfamily.

It localises to the cytoplasm. It carries out the reaction alpha-D-galactose + ATP = alpha-D-galactose 1-phosphate + ADP + H(+). The protein operates within carbohydrate metabolism; galactose metabolism. Its function is as follows. Catalyzes the transfer of the gamma-phosphate of ATP to D-galactose to form alpha-D-galactose-1-phosphate (Gal-1-P). The sequence is that of Galactokinase from Escherichia coli O81 (strain ED1a).